The following is a 606-amino-acid chain: MPVTEVGSLPELNNILERSDANRLIIIDFFANWCGPCRMISPIFEQFSAEYGNATFLKVNCDVARDIVQRYNISAMPTFIFLKNRQQVDMVRGANQQAIAEKIRQHYSPTPANPNAASDSEKRFLEQFVKCSNVPRSYQDEVFKALARSVMPEELVGRAMTEGPRDEKAILKDLLHWFKTQFFTWFDRPTCPKCTLKCSTDGLQGTPTREEQKEGGASRVEVYICDGCNTEMRFPRYNNPAKLLQTRTGRCGEWANCFGLLLAALNLESRFIYDTTDHVWNEVYLLAEQRWCHVDPCENTMDRPLLYTRGWGKTLGYCIGYGSDHVVDVTWRYIWDSKKLVTQRNEVRQPVFENFLSKLNSRQAEGQTEPRKRELAVRRVCELMEMMAQEAKNHKIGWEKIGDDLGGRITGSEEWRRERGELGESGPKLLAEPIKLAPPTGPAQNYLEFNYDVITDTYSQPPEIGFSAQAFELENVQRVEETDWNMTYLCRKRGDAPGNISWHFDLKSLKKSIEKIEIRMAGIQKFEKGKAMAIACLGDSCMRLPIDCSALTIEDPKNAEILKITATLSGGEGAIGFQQAQIFRTELKRGGGARTESFSVKIWMKN.

The 107-residue stretch at 2-108 (PVTEVGSLPE…IAEKIRQHYS (107 aa)) folds into the Thioredoxin domain. Residues C191, C194, C225, and C228 each contribute to the Zn(2+) site. C251 serves as the catalytic Nucleophile. Catalysis depends on residues H278 and D295. The PAW domain maps to 404–606 (DLGGRITGSE…SFSVKIWMKN (203 aa)).

It belongs to the transglutaminase-like superfamily. PNGase family. Requires Zn(2+) as cofactor.

Its subcellular location is the cytoplasm. It is found in the endoplasmic reticulum. It catalyses the reaction Hydrolysis of an N(4)-(acetyl-beta-D-glucosaminyl)asparagine residue in which the glucosamine residue may be further glycosylated, to yield a (substituted) N-acetyl-beta-D-glucosaminylamine and a peptide containing an aspartate residue.. Inhibited by Zn(2+) and z-VAD-fmk (caspase inhibitor) but unaffected by EDTA. Specifically deglycosylates the denatured form of N-linked glycoproteins in the cytoplasm and assists their proteasome-mediated degradation. Cleaves the beta-aspartyl-glucosamine (GlcNAc) of the glycan and the amide side chain of Asn, converting Asn to Asp. Prefers proteins containing high-mannose over those bearing complex type oligosaccharides. Can recognize misfolded proteins in the endoplasmic reticulum that are exported to the cytosol to be destroyed and deglycosylate them, while it has no activity toward native proteins. Deglycosylation is a prerequisite for subsequent proteasome-mediated degradation of some, but not all, misfolded glycoproteins. Also displays oxidoreductase (thioredoxin) activity. Involved in regulating the expression of proteasomal subunits such as rpt-3 in order to confer resistance to proteasomal dysfunction. This Caenorhabditis elegans protein is Peptide-N(4)-(N-acetyl-beta-glucosaminyl)asparagine amidase (png-1).